A 1374-amino-acid chain; its full sequence is MTSTSPKSRKPSTKTTKSKSKSKSKSKAAKAAAASASPALARTPPQFRNRVVDKKALKQLVAWAYKTHGTAVTASMADNLKDLGFRYATQAAVSISVEDLKVPEAKQDLLCQAEAQITATEECYRLGEITEVERHTKVIDTWTETNERLVDAVKKNFNQNDPLNSVWMMANSGARGNMSQVRQLVGMRGLMANPQGEIIDLPIRTNFREGLTVTEYVISSYGARKGLVDTALRTADSGYLTRRLVDVAQDVIVREDDCGTTRGIIVKVEDGGFGSRLVGRLTADQVVNVDGEILAERNTEIDPPLSKRFEKAAITEVMVRSPLTCEANRSVCRKCYGWALAHNELADLGEAVGIIAAQSIGEPGTQLTMRTFHTGGVSTAETGVVRSTVAGTVEFGPKARVRGYRTPHGLEAQQSEVDFTLTVKPSGKGRAQRIDITTGSLLFVSDGQEIEADVTVVQIASVAVKKSVEKATKDVICDLAGQVRYEQVIQPREVKDRQGNITLKAQRLGRLWVLAGDVYNLPPNAEPVVQGNVKVERGQVLAEASQASEFGGEVRLRDSIGDSREVQIVTTSMTMKDFKLLGESTHSGELWHLEAKEGTRYRLNTIPGSKIGNGEVVAELADDRFRTQTGGLVRFAPGLAIKKARSAKNGFEVNKGGTLLWIPQETHEINKDISLLMIEDGQWIEAGTEVVKDIFSQTAGIVTVTQKNDILREIIVRSGSFHLCAETKALERFRGDGQIVNPGETIAKGINSEAMVFVQTEDTPEGTGLLLRPVEEYTIPNEAHLPELTHVKQPKGPHLGIKATQRLAFKDGELIKSVEGVELLKTQLILETFDTTPQMTVDVEAVRDKRAKTIERLRLVILESILVRRDTISDSSHGSTHTELQIEDGQSVKASDVVATTQILCKQEGIAQLPVPQEGDPVRRLIVERDEDTITVTTKGSPLVGVGQRLVDGDSLAKDEPSSCCGEVEEVEGKAITLRLGRPYMVSPDSVLHVRDGDLVQRGDGLALLVFERQKTGDIVQGLPRIEELLEARRPRESAVLCKKPGTVEIKQGEDDESITVTVIEADDAIGEYPILLGRNVMVSNGQQVHAGELLTDGPINPHELLDCFFEDLRGRKPLMDAAQEAIAKLQHRLVTEVQNVYKSQGVSIDDKHIEVIVRQMTSKVRIEDAGDTTLLPGELIELRQVEDTNQAMAITGGAPSEFTPVLLGITKASLNTDSFISAASFQETTRVLTEAAIEGKSDWLRGLKENVIIGRLIPAGTGFSGFQEELRAEAGPHPDILAEDPAGYRRMQNLRPDYTVDMPAAPAASSTAVLADPSAADLEATRSRHGIDPAASNFAAFVRPTGENELEEEQLPDPSALEGLQQEGLLTEE.

Residues 1 to 47 (MTSTSPKSRKPSTKTTKSKSKSKSKSKAAKAAAASASPALARTPPQF) form a disordered region. The span at 7 to 28 (KSRKPSTKTTKSKSKSKSKSKA) shows a compositional bias: basic residues. The span at 29–45 (AKAAAASASPALARTPP) shows a compositional bias: low complexity. Residues Cys258, Cys325, Cys332, and Cys335 each contribute to the Zn(2+) site. The tract at residues 1343-1374 (VRPTGENELEEEQLPDPSALEGLQQEGLLTEE) is disordered. Residues 1362-1374 (LEGLQQEGLLTEE) show a composition bias toward low complexity.

Belongs to the RNA polymerase beta' chain family. RpoC2 subfamily. In cyanobacteria the RNAP catalytic core is composed of 2 alpha, 1 beta, 1 beta', 1 gamma and 1 omega subunit. When a sigma factor is associated with the core the holoenzyme is formed, which can initiate transcription. It depends on Zn(2+) as a cofactor.

It catalyses the reaction RNA(n) + a ribonucleoside 5'-triphosphate = RNA(n+1) + diphosphate. Functionally, DNA-dependent RNA polymerase catalyzes the transcription of DNA into RNA using the four ribonucleoside triphosphates as substrates. This is DNA-directed RNA polymerase subunit beta' from Prochlorococcus marinus (strain MIT 9303).